The sequence spans 570 residues: Apyrase (570 aa).

The first 23 residues, 1–23, serve as a signal peptide directing secretion; the sequence is MALVRFATIITVLCHLAIQDGAA. The a divalent metal cation site is built by aspartate 43, histidine 45, and aspartate 94. A glycan (N-linked (GlcNAc...) asparagine) is linked at asparagine 108. 3 residues coordinate a divalent metal cation: asparagine 126, histidine 229, and histidine 253. Residues asparagine 287 and asparagine 326 are each glycosylated (N-linked (GlcNAc...) asparagine). An AMP-binding site is contributed by arginine 367. An N-linked (GlcNAc...) asparagine glycan is attached at asparagine 387. AMP-binding residues include arginine 402 and aspartate 507. N-linked (GlcNAc...) asparagine glycosylation is found at asparagine 552 and asparagine 555.

It belongs to the 5'-nucleotidase family. As to quaternary structure, interacts with human PLAT; the interaction results in PLAT activation probably via an allosteric activation mechanism. A divalent metal cation is required as a cofactor. Saliva (at protein level). Salivary gland (at protein level). Not detected in midgut.

Its subcellular location is the secreted. The catalysed reaction is a ribonucleoside 5'-triphosphate + 2 H2O = a ribonucleoside 5'-phosphate + 2 phosphate + 2 H(+). In terms of biological role, cleaves adenosine triphosphate (ATP) and adenosine diphosphate (ADP) to adenosine monophosphate (AMP) and inorganic phosphate. Enhances fibrin degradation in the midgut blood bolus. Activates human tissue plasminogen activator (PLAT), probably via an allosteric activation mechanism. Inhibits ADP-mediated host platelet aggregation in vitro and in mosquito midgut. Inhibits host neutrophil activation in the mosquito midgut: reduces neutrophil extracellular traps formation in the presence of platelets and the formation of total cell- and mitochondrial-derived reactive oxygen species. Its function is as follows. (Microbial infection) Promotes Plasmodium berghei parasite transmission from the mammalian host to the mosquito probably by reducing the blood bolus viscosity. Facilitates sporozoite transmission from the mosquito to the mammalian host during blood feeding. In Anopheles gambiae (African malaria mosquito), this protein is Apyrase.